A 322-amino-acid chain; its full sequence is Nitrilase (322 aa).

Positions 5–283 (VRVGAVQSEP…EAILTADIDL (279 aa)) constitute a CN hydrolase domain. Catalysis depends on E45, which acts as the Proton acceptor. K127 is a catalytic residue. The active-site Nucleophile is the C162.

Belongs to the carbon-nitrogen hydrolase superfamily. Nitrilase family.

The enzyme catalyses a nitrile + 2 H2O = a carboxylate + NH4(+). Nitrilase that hydrolyzes preferentially 4-cyanopyridine. This is Nitrilase from Talaromyces marneffei (strain ATCC 18224 / CBS 334.59 / QM 7333) (Penicillium marneffei).